An 86-amino-acid chain; its full sequence is Small ribosomal subunit protein uS15 (86 aa).

The tract at residues 1-22 is disordered; sequence MSVDTQKVIEDNKRSAQDTGSP. Residues 7 to 16 are compositionally biased toward basic and acidic residues; it reads KVIEDNKRSA.

Belongs to the universal ribosomal protein uS15 family. Part of the 30S ribosomal subunit. Forms a bridge to the 50S subunit in the 70S ribosome, contacting the 23S rRNA.

In terms of biological role, one of the primary rRNA binding proteins, it binds directly to 16S rRNA where it helps nucleate assembly of the platform of the 30S subunit by binding and bridging several RNA helices of the 16S rRNA. Functionally, forms an intersubunit bridge (bridge B4) with the 23S rRNA of the 50S subunit in the ribosome. This chain is Small ribosomal subunit protein uS15, found in Xanthomonas axonopodis pv. citri (strain 306).